Reading from the N-terminus, the 565-residue chain is Genetic interactor of prohibitins 3, mitochondrial (565 aa).

Residues 129 to 315 (TDVLEKIPRG…IYDLPGFTTN (187 aa)) enclose the CP-type G domain.

Belongs to the TRAFAC class YlqF/YawG GTPase family. GEP3 subfamily.

The protein localises to the mitochondrion. Functionally, may be involved in the mitochondrial lipid metabolism. This Zygosaccharomyces rouxii (strain ATCC 2623 / CBS 732 / NBRC 1130 / NCYC 568 / NRRL Y-229) protein is Genetic interactor of prohibitins 3, mitochondrial (GEP3).